A 224-amino-acid polypeptide reads, in one-letter code: UPF0758 protein Noc_0236 (224 aa).

In terms of domain architecture, MPN spans 102 to 224 (VLTDPQTTQR…TLSFAERGLL (123 aa)). His173, His175, and Asp186 together coordinate Zn(2+). A JAMM motif motif is present at residues 173-186 (HNHPSGVAEPSRAD).

It belongs to the UPF0758 family.

The polypeptide is UPF0758 protein Noc_0236 (Nitrosococcus oceani (strain ATCC 19707 / BCRC 17464 / JCM 30415 / NCIMB 11848 / C-107)).